A 361-amino-acid chain; its full sequence is Caspase activity and apoptosis inhibitor 1 (361 aa).

Basic residues predominate over residues 1-14 (MTGKKSSREKRRKR). Disordered stretches follow at residues 1–28 (MTGK…APDI) and 67–100 (GGSG…GSLQ). Over residues 19 to 28 (AAAALAAPDI) the composition is skewed to low complexity. Ser89 carries the post-translational modification Phosphoserine. Phosphothreonine is present on Thr90. Residue Lys104 forms a Glycyl lysine isopeptide (Lys-Gly) (interchain with G-Cter in SUMO2) linkage. Residues Ser120 and Ser203 each carry the phosphoserine modification. Disordered regions lie at residues 198–218 (DNGM…MGSD) and 230–331 (ASSV…DVQP). Residues 199 to 210 (NGMDSDMEEEAD) are compositionally biased toward acidic residues. Positions 234–251 (RENKQPEGLELKQGKGED) are enriched in basic and acidic residues. The span at 272 to 281 (EEAAAPEAPE) shows a compositional bias: low complexity. A coiled-coil region spans residues 281-311 (ENTVQSEAGQIDDLEKDIEKSVNEILGLAES). Ser312 carries the phosphoserine modification.

In terms of tissue distribution, ubiquitous.

Its function is as follows. Anti-apoptotic protein that modulates a caspase-10 dependent mitochondrial caspase-3/9 feedback amplification loop. This Homo sapiens (Human) protein is Caspase activity and apoptosis inhibitor 1 (CAAP1).